The sequence spans 195 residues: MTHNFLNHAPGFSYQNQAPQPQYYTRQPPSAGAHYPPNPLTPSQYVGGPSYSAGRPYQSQHAYAQPGCTSCGTGCNTGCNVQANCNIPNFYTDFKPPSFQTTYCPPSVNVGCYNTPQKTYPQTNNYRSAHNPNQFNMGFNTQVPSFNYGGGPCVTYGTPSYSQQQEPQHYYKKHKHHSHHRPKHVKSSRSCKSCN.

Disordered regions lie at residues 1–51 and 160–195; these read MTHN…GPSY and SYSQ…KSCN. Positions 13-28 are enriched in polar residues; that stretch reads SYQNQAPQPQYYTRQP. Residues 170–189 show a composition bias toward basic residues; that stretch reads YYKKHKHHSHHRPKHVKSSR.

This is an uncharacterized protein from Acanthamoeba polyphaga mimivirus (APMV).